We begin with the raw amino-acid sequence, 135 residues long: ATP synthase epsilon chain (135 aa).

It belongs to the ATPase epsilon chain family. In terms of assembly, F-type ATPases have 2 components, CF(1) - the catalytic core - and CF(0) - the membrane proton channel. CF(1) has five subunits: alpha(3), beta(3), gamma(1), delta(1), epsilon(1). CF(0) has three main subunits: a, b and c.

Its subcellular location is the cellular thylakoid membrane. In terms of biological role, produces ATP from ADP in the presence of a proton gradient across the membrane. The polypeptide is ATP synthase epsilon chain (Prochlorococcus marinus (strain NATL1A)).